A 1378-amino-acid polypeptide reads, in one-letter code: Carboxypeptidase D (1378 aa).

The first 37 residues, 1 to 37, serve as a signal peptide directing secretion; the sequence is MASGWDERPPWRLESLRLLPPPPLLLLLLLLRSSAQA. Topologically, residues 38-1297 are extracellular; it reads AHIKKAEATT…DNRIFGLPRE (1260 aa). In terms of domain architecture, Peptidase M14 1 spans 62 to 380; that stretch reads HYYHEAALGE…ESLITLIEKV (319 aa). His-139 and Glu-142 together coordinate Zn(2+). The short motif at 162–164 is the Cell attachment site element; it reads RGD. 2 N-linked (GlcNAc...) asparagine glycosylation sites follow: Asn-172 and Asn-217. Residues 189 to 232 form a disordered region; that stretch reads RAREGDCGLGDSGPPGTSGRDNSRGRDLNRSFPDQFSTGEPPSL. His-257 contacts Zn(2+). The residue at position 265 (Tyr-265) is a Phosphotyrosine. Ser-270 carries the phosphoserine modification. Glu-350 (proton donor/acceptor) is an active-site residue. 4 N-linked (GlcNAc...) asparagine glycosylation sites follow: Asn-399, Asn-410, Asn-429, and Asn-522. Positions 502–792 constitute a Peptidase M14 2 domain; sequence HHHHFPDMEI…RSLIQFMKQV (291 aa). Residues His-564 and Glu-567 each coordinate Zn(2+). N-linked (GlcNAc...) asparagine glycosylation is present at Asn-626. His-671 lines the Zn(2+) pocket. Catalysis depends on Glu-762, which acts as the Proton donor/acceptor. Asn-811, Asn-855, Asn-867, Asn-879, Asn-953, and Asn-976 each carry an N-linked (GlcNAc...) asparagine glycan. Positions 875-898 are disordered; sequence TDANNESKKGKGHSTSTDDTSDPT. A Peptidase M14 3 domain is found at 930 to 1209; sequence RYHSYKDLSE…KSLLSMLVEV (280 aa). Over residues 1039–1048 the composition is skewed to basic and acidic residues; the sequence is RERAQEKDCT. A disordered region spans residues 1039-1068; it reads RERAQEKDCTSKTGHTNARGRDLDTDFTSN. Asn-1068 and Asn-1140 each carry an N-linked (GlcNAc...) asparagine glycan. Residues 1298–1318 traverse the membrane as a helical segment; sequence LVVTVSGATMSALILTACIIW. Residues Cys-1315, Cys-1319, and Cys-1321 are each lipidated (S-palmitoyl cysteine). The Cytoplasmic segment spans residues 1319 to 1378; that stretch reads CICSIKSNRHKDGFHRLRQHHDEYEDEIRMMSTGSKKSLLSHEFQDETDTEEETLYSSKH. Phosphoserine occurs at positions 1356 and 1359. The tract at residues 1357–1378 is disordered; sequence LLSHEFQDETDTEEETLYSSKH. 2 positions are modified to phosphothreonine: Thr-1366 and Thr-1368.

The protein belongs to the peptidase M14 family. The cofactor is Zn(2+). Isoform 1 is widely expressed with highest levels in the hippocampus, spinal cord, atrium, colon, testis and ovaries. Detected in the liver of females but not males. Isoform 2 is not detected in brain or lung.

It is found in the cell membrane. The protein localises to the nucleus. It carries out the reaction Releases C-terminal Arg and Lys from polypeptides.. This Rattus norvegicus (Rat) protein is Carboxypeptidase D.